A 240-amino-acid polypeptide reads, in one-letter code: UDP-2,3-diacylglucosamine hydrolase (240 aa).

Mn(2+)-binding residues include Asp8, His10, Asp41, Asn79, and His114. 79 to 80 lines the substrate pocket; sequence NR. Asp122, Ser160, Asn164, Lys167, and His195 together coordinate substrate. Residues His195 and His197 each coordinate Mn(2+).

It belongs to the LpxH family. It depends on Mn(2+) as a cofactor.

It is found in the cell inner membrane. It catalyses the reaction UDP-2-N,3-O-bis[(3R)-3-hydroxytetradecanoyl]-alpha-D-glucosamine + H2O = 2-N,3-O-bis[(3R)-3-hydroxytetradecanoyl]-alpha-D-glucosaminyl 1-phosphate + UMP + 2 H(+). The protein operates within glycolipid biosynthesis; lipid IV(A) biosynthesis; lipid IV(A) from (3R)-3-hydroxytetradecanoyl-[acyl-carrier-protein] and UDP-N-acetyl-alpha-D-glucosamine: step 4/6. In terms of biological role, hydrolyzes the pyrophosphate bond of UDP-2,3-diacylglucosamine to yield 2,3-diacylglucosamine 1-phosphate (lipid X) and UMP by catalyzing the attack of water at the alpha-P atom. Involved in the biosynthesis of lipid A, a phosphorylated glycolipid that anchors the lipopolysaccharide to the outer membrane of the cell. This Escherichia coli O6:H1 (strain CFT073 / ATCC 700928 / UPEC) protein is UDP-2,3-diacylglucosamine hydrolase.